The primary structure comprises 193 residues: Cysteine and glycine-rich protein 2 (193 aa).

The LIM zinc-binding 1 domain maps to 10–61; sequence CGACGRTVYHAEEVQCDGRSFHRCCFLCMVCRKNLDSTTVAIHDEEIYCKSC. The short motif at 64 to 69 is the Nuclear localization signal element; it reads KKYGPK. Lys91 is covalently cross-linked (Glycyl lysine isopeptide (Lys-Gly) (interchain with G-Cter in SUMO2)). Lys112 and Lys131 each carry N6-acetyllysine. One can recognise an LIM zinc-binding 2 domain in the interval 119–170; sequence CSRCGDSVYAAEKIIGAGKPWHKNCFRCAKCGKSLESTTLTEKEGEIYCKGC. At Lys137 the chain carries N6-acetyllysine; alternate. Lys137 is modified (N6-succinyllysine; alternate). Lys161 is subject to N6-acetyllysine.

Interacts with KAT14. The LIM domain 1 is necessary and sufficient for this interaction. Interacts with GLRX3.

It localises to the nucleus. Drastically down-regulated in response to PDGF-BB or cell injury, that promote smooth muscle cell proliferation and dedifferentiation. Seems to play a role in the development of the embryonic vascular system. In Bos taurus (Bovine), this protein is Cysteine and glycine-rich protein 2 (CSRP2).